The sequence spans 200 residues: Snake venom metalloproteinase BmooMP-I (200 aa).

The region spanning 5–200 is the Peptidase M12B domain; that stretch reads RYIELAVVAD…HNPQCILNEP (196 aa). 2 residues coordinate Ca(2+): Glu8 and Asp92. 3 disulfides stabilise this stretch: Cys116-Cys195, Cys155-Cys179, and Cys157-Cys162. His141 is a Zn(2+) binding site. Residue Glu142 is part of the active site. Residues His145 and His151 each coordinate Zn(2+). Residues Cys195 and Asn198 each coordinate Ca(2+).

The protein belongs to the venom metalloproteinase (M12B) family. P-I subfamily. As to quaternary structure, monomer. Zn(2+) is required as a cofactor. In terms of tissue distribution, expressed by the venom gland.

It is found in the secreted. Its function is as follows. Zinc metalloprotease that displays fibrinogenolytic, gelatinase and weak hemorrhagic activities. Degrades the three chain of fibrinogen Aalpha-chain (FGA), Bbeta-chain (FGB), and gamma (FGG). In Bothrops moojeni (Lance-headed viper), this protein is Snake venom metalloproteinase BmooMP-I.